The chain runs to 248 residues: Probable transcriptional regulatory protein NGR_c27950 (248 aa).

Belongs to the TACO1 family.

It localises to the cytoplasm. In Sinorhizobium fredii (strain NBRC 101917 / NGR234), this protein is Probable transcriptional regulatory protein NGR_c27950.